Reading from the N-terminus, the 109-residue chain is uncharacterized protein (109 aa).

Residues 42 to 100 enclose the HTH cro/C1-type domain; it reads LEEKLKQEKIDRKYLAEVTNIPYTTVSRIMRAEANREFNPEIDTILKIAKYFNCTMDEV. Residues 53 to 72 constitute a DNA-binding region (H-T-H motif); it reads RKYLAEVTNIPYTTVSRIMR.

This is an uncharacterized protein from Rickettsia conorii (strain ATCC VR-613 / Malish 7).